The following is a 320-amino-acid chain: Aspartate carbamoyltransferase catalytic subunit (320 aa).

Carbamoyl phosphate is bound by residues Arg70 and Thr71. An L-aspartate-binding site is contributed by Lys98. Carbamoyl phosphate is bound by residues Arg120, His150, and Gln153. Positions 184 and 239 each coordinate L-aspartate. Carbamoyl phosphate contacts are provided by Gly280 and Pro281.

Belongs to the aspartate/ornithine carbamoyltransferase superfamily. ATCase family. In terms of assembly, heterododecamer (2C3:3R2) of six catalytic PyrB chains organized as two trimers (C3), and six regulatory PyrI chains organized as three dimers (R2).

The catalysed reaction is carbamoyl phosphate + L-aspartate = N-carbamoyl-L-aspartate + phosphate + H(+). The protein operates within pyrimidine metabolism; UMP biosynthesis via de novo pathway; (S)-dihydroorotate from bicarbonate: step 2/3. In terms of biological role, catalyzes the condensation of carbamoyl phosphate and aspartate to form carbamoyl aspartate and inorganic phosphate, the committed step in the de novo pyrimidine nucleotide biosynthesis pathway. The chain is Aspartate carbamoyltransferase catalytic subunit from Xylella fastidiosa (strain Temecula1 / ATCC 700964).